The chain runs to 116 residues: Large ribosomal subunit protein bL20 (116 aa).

The protein belongs to the bacterial ribosomal protein bL20 family.

Its function is as follows. Binds directly to 23S ribosomal RNA and is necessary for the in vitro assembly process of the 50S ribosomal subunit. It is not involved in the protein synthesizing functions of that subunit. This chain is Large ribosomal subunit protein bL20, found in Helicobacter pylori (strain G27).